The sequence spans 249 residues: AA9 family lytic polysaccharide monooxygenase A (249 aa).

The signal sequence occupies residues methionine 1–alanine 19. Cu(2+)-binding residues include histidine 20 and histidine 97. A disulfide bond links cysteine 60 and cysteine 183. Histidine 163 contributes to the O2 binding site. A Cu(2+)-binding site is contributed by tyrosine 180.

Belongs to the polysaccharide monooxygenase AA9 family. Cu(2+) is required as a cofactor.

The protein localises to the secreted. It carries out the reaction [(1-&gt;4)-beta-D-glucosyl]n+m + reduced acceptor + O2 = 4-dehydro-beta-D-glucosyl-[(1-&gt;4)-beta-D-glucosyl]n-1 + [(1-&gt;4)-beta-D-glucosyl]m + acceptor + H2O.. Its function is as follows. Lytic polysaccharide monooxygenase (LPMO) that depolymerizes crystalline and amorphous polysaccharides via the oxidation of scissile alpha- or beta-(1-4)-glycosidic bonds, yielding C4 oxidation products. Catalysis by LPMOs requires the reduction of the active-site copper from Cu(II) to Cu(I) by a reducing agent and H(2)O(2) or O(2) as a cosubstrate. Active on cellulose and cello-oligosaccharides, as well as plant cell wall-derived hemicellulosic polysaccharides. Also active on cello-oligosaccharides such as cellohexaose, cellopentaose or cellotetraose. The protein is AA9 family lytic polysaccharide monooxygenase A of Armillaria gallica (Bulbous honey fungus).